Consider the following 141-residue polypeptide: Acetyltransferase YE1169 (141 aa).

Residues 1–141 (MEIRVFQQSD…GKRLIVDQEY (141 aa)) form the N-acetyltransferase domain.

This sequence belongs to the acetyltransferase family. YpeA subfamily.

In Yersinia enterocolitica serotype O:8 / biotype 1B (strain NCTC 13174 / 8081), this protein is Acetyltransferase YE1169.